Here is a 303-residue protein sequence, read N- to C-terminus: Methyltransferase ktnA (303 aa).

Belongs to the class I-like SAM-binding methyltransferase superfamily. Requires S-adenosyl-L-methionine as cofactor.

Non-reducing polyketide synthase; part of the gene cluster that mediates the biosynthesis of the bicoumarin kotanin. The non-reducing polyketide synthase ktnS first catalyzes the formation of the pentaketidic 4,7-dihydroxy-5-methylcoumarin from acetyl coenzyme A and 4 malonyl coenzyme A molecules. Further O-methylation by ktnB leads to the formation of 7-demethylsiderin. Then, an oxidative phenol coupling catalyzed by the cytochrome P450 monooxygenase ktnC forms the 8,8'-dimer P-orlandin via dimerization the monomeric precursor, 7-demethylsiderin. P-orlandin is subsequently O-methylated in a stepwise fashion to demethylkotanin and kotanin. The function of ktnA within the pathway has not been determined yet. The protein is Methyltransferase ktnA of Aspergillus niger (strain ATCC MYA-4892 / CBS 513.88 / FGSC A1513).